The sequence spans 192 residues: uncharacterized protein (192 aa).

Residues 29–160 (QRQAAVLIPV…PLDVYRRGNS (132 aa)) form the Nudix hydrolase domain. Positions 67–89 (GAVDSTDASLIAAALREAQEEVA) match the Nudix box motif. Mg(2+) contacts are provided by Glu-83 and Glu-87.

The protein belongs to the Nudix hydrolase family. PCD1 subfamily. It depends on Mn(2+) as a cofactor. Mg(2+) serves as cofactor.

In terms of biological role, probably mediates the hydrolysis of some nucleoside diphosphate derivatives. This is an uncharacterized protein from Salmonella choleraesuis (strain SC-B67).